Reading from the N-terminus, the 224-residue chain is uncharacterized protein (224 aa).

The N-terminal stretch at 1 to 30 is a signal peptide; sequence MSRSSSSMATVLVVLMVVSAGGLSPPCAAA. A glycan (N-linked (GlcNAc...) asparagine) is linked at Asn-141.

Its subcellular location is the secreted. This is an uncharacterized protein from Oryza sativa subsp. japonica (Rice).